Consider the following 184-residue polypeptide: ATP synthase subunit b, chloroplastic (184 aa).

Residues 27 to 49 traverse the membrane as a helical segment; the sequence is LATNPINLSVVLGVLIFFGKGVL.

Belongs to the ATPase B chain family. In terms of assembly, F-type ATPases have 2 components, F(1) - the catalytic core - and F(0) - the membrane proton channel. F(1) has five subunits: alpha(3), beta(3), gamma(1), delta(1), epsilon(1). F(0) has four main subunits: a(1), b(1), b'(1) and c(10-14). The alpha and beta chains form an alternating ring which encloses part of the gamma chain. F(1) is attached to F(0) by a central stalk formed by the gamma and epsilon chains, while a peripheral stalk is formed by the delta, b and b' chains.

Its subcellular location is the plastid. The protein localises to the chloroplast thylakoid membrane. Its function is as follows. F(1)F(0) ATP synthase produces ATP from ADP in the presence of a proton or sodium gradient. F-type ATPases consist of two structural domains, F(1) containing the extramembraneous catalytic core and F(0) containing the membrane proton channel, linked together by a central stalk and a peripheral stalk. During catalysis, ATP synthesis in the catalytic domain of F(1) is coupled via a rotary mechanism of the central stalk subunits to proton translocation. In terms of biological role, component of the F(0) channel, it forms part of the peripheral stalk, linking F(1) to F(0). This Citrus sinensis (Sweet orange) protein is ATP synthase subunit b, chloroplastic.